The sequence spans 512 residues: Maturase K (512 aa).

This sequence belongs to the intron maturase 2 family. MatK subfamily.

Its subcellular location is the plastid. It localises to the chloroplast. Its function is as follows. Usually encoded in the trnK tRNA gene intron. Probably assists in splicing its own and other chloroplast group II introns. The sequence is that of Maturase K from Lilium longiflorum (Trumpet lily).